Here is a 62-residue protein sequence, read N- to C-terminus: Large ribosomal subunit protein bL28 (62 aa).

The protein belongs to the bacterial ribosomal protein bL28 family.

The polypeptide is Large ribosomal subunit protein bL28 (Wolinella succinogenes (strain ATCC 29543 / DSM 1740 / CCUG 13145 / JCM 31913 / LMG 7466 / NCTC 11488 / FDC 602W) (Vibrio succinogenes)).